The sequence spans 365 residues: UDP-N-acetylglucosamine--N-acetylmuramyl-(pentapeptide) pyrophosphoryl-undecaprenol N-acetylglucosamine transferase (365 aa).

Residues 13–15 (TGG), Asn125, Arg165, Ser192, and Gln293 each bind UDP-N-acetyl-alpha-D-glucosamine.

Belongs to the glycosyltransferase 28 family. MurG subfamily.

It localises to the cell inner membrane. The catalysed reaction is di-trans,octa-cis-undecaprenyl diphospho-N-acetyl-alpha-D-muramoyl-L-alanyl-D-glutamyl-meso-2,6-diaminopimeloyl-D-alanyl-D-alanine + UDP-N-acetyl-alpha-D-glucosamine = di-trans,octa-cis-undecaprenyl diphospho-[N-acetyl-alpha-D-glucosaminyl-(1-&gt;4)]-N-acetyl-alpha-D-muramoyl-L-alanyl-D-glutamyl-meso-2,6-diaminopimeloyl-D-alanyl-D-alanine + UDP + H(+). It functions in the pathway cell wall biogenesis; peptidoglycan biosynthesis. In terms of biological role, cell wall formation. Catalyzes the transfer of a GlcNAc subunit on undecaprenyl-pyrophosphoryl-MurNAc-pentapeptide (lipid intermediate I) to form undecaprenyl-pyrophosphoryl-MurNAc-(pentapeptide)GlcNAc (lipid intermediate II). The chain is UDP-N-acetylglucosamine--N-acetylmuramyl-(pentapeptide) pyrophosphoryl-undecaprenol N-acetylglucosamine transferase from Ruegeria sp. (strain TM1040) (Silicibacter sp.).